The sequence spans 566 residues: Chaperone Ric-8 (566 aa).

This sequence belongs to the synembryn family. As to quaternary structure, interacts with GDP-bound G(i)-alpha protein. Does not interact with G-alpha proteins when they are in complex with subunits beta and gamma. Interacts with Frq2 in a Ca(2+)-independent manner but does not interact with Frq1.

Its subcellular location is the cytoplasm. The protein resides in the cell cortex. It localises to the presynapse. Chaperone that specifically binds and folds some, but not all, nascent G alpha proteins prior to G protein heterotrimer formation, promoting their stability and activity. Also acts as a guanine nucleotide exchange factor (GEF) for G alpha proteins by stimulating exchange of bound GDP for free GTP. Plays a key role in asymmetric spindle positioning, a step for asymmetric cell division that generates cell diversity during development by activating G(i) alpha protein independently of G-protein coupled receptors. Required during gastrulation and sensory organ precursor (SOP) formation. Plays a role in positively regulating synapse number and neurotransmitter release. The polypeptide is Chaperone Ric-8 (ric8a) (Drosophila pseudoobscura pseudoobscura (Fruit fly)).